The following is a 274-amino-acid chain: Transmembrane O-methyltransferase (274 aa).

The helical transmembrane segment at valine 14–valine 34 threads the bilayer. Residues glutamate 120, glycine 122–threonine 123, serine 128, glutamate 146, and serine 176 each bind S-adenosyl-L-methionine.

This sequence belongs to the class I-like SAM-binding methyltransferase superfamily. Cation-dependent O-methyltransferase family. As to quaternary structure, interacts with LHFPL5, PCDH15, TMC1, TMC2 and TMIE. Interacts directly with TMC1. The interaction of TOMT with TMC1 and TMC2 is required for the transportation of TMC1/2 into the stereocilia of hair cells.

It localises to the membrane. It is found in the cytoplasm. The protein localises to the endoplasmic reticulum. The catalysed reaction is a catechol + S-adenosyl-L-methionine = a guaiacol + S-adenosyl-L-homocysteine + H(+). Its function is as follows. Catalyzes the O-methylation, and thereby the inactivation, of catecholamine neurotransmitters and catechol hormones. Required for auditory function. Component of the cochlear hair cell's mechanotransduction (MET) machinery. Involved in the assembly of the asymmetric tip-link MET complex. Required for transportation of TMC1 and TMC2 proteins into the mechanically sensitive stereocilia of the hair cells. The function in MET is independent of the enzymatic activity. In Propithecus coquereli (Coquerel's sifaka), this protein is Transmembrane O-methyltransferase.